Consider the following 194-residue polypeptide: Dephospho-CoA kinase (194 aa).

The region spanning 3-194 is the DPCK domain; sequence IVGLTGSIGM…RAIVDDLRAG (192 aa). Residue 11-16 coordinates ATP; it reads GMGKST.

Belongs to the CoaE family.

It localises to the cytoplasm. It carries out the reaction 3'-dephospho-CoA + ATP = ADP + CoA + H(+). The protein operates within cofactor biosynthesis; coenzyme A biosynthesis; CoA from (R)-pantothenate: step 5/5. In terms of biological role, catalyzes the phosphorylation of the 3'-hydroxyl group of dephosphocoenzyme A to form coenzyme A. The protein is Dephospho-CoA kinase of Rhizobium meliloti (strain 1021) (Ensifer meliloti).